The chain runs to 181 residues: Succinate dehydrogenase [ubiquinone] cytochrome b small subunit, mitochondrial (181 aa).

Residues 1–31 constitute a mitochondrion transit peptide; it reads MMLPRSMKFMTGRRIFHTATVRAFQSTAKKS. Over 32–66 the chain is Mitochondrial matrix; that stretch reads LTIPFLPVLPQKPGGVRGTPNDAYVPPPENKLEGS. Residues 67–88 form a helical membrane-spanning segment; that stretch reads YHWYMEKIFALSVVPLATTAML. The Mitochondrial intermembrane segment spans residues 89-98; it reads TTGPLSTAAD. A helical membrane pass occupies residues 99–118; it reads SFFSVMLLGYCYMEFNSCIT. A heme-binding site is contributed by Cys-109. Topologically, residues 119–127 are mitochondrial matrix; sequence DYISERVYG. Tyr-120 is an a ubiquinone binding site. The helical transmembrane segment at 128–148 threads the bilayer; sequence VWHKYAMYMLGLGSAVSLFGI. Over 149–181 the chain is Mitochondrial intermembrane; the sequence is YKLETENDGVVGLVKSLWDSSEKDNSQKIEAKK.

It belongs to the CybS family. In terms of assembly, forms part of complex II containing four subunits: a flavoprotein (FP), an iron-sulfur protein (IP) and a cytochrome b composed of a large and a small subunit.

The protein resides in the mitochondrion inner membrane. The protein operates within carbohydrate metabolism; tricarboxylic acid cycle. Functionally, membrane-anchoring subunit of succinate dehydrogenase (SDH) that is involved in system II of the mitochondrial electron transport chain and is responsible for transferring electrons from succinate to ubiquinone (coenzyme Q). SDH3 and SDH4 form the membrane dimer that anchors the catalytic dimer formed by SDH1 and SDH2 to the matrix surface of the mitochondrial inner membrane. Electrons originating from the catalytic dimer enter the membrane dimer for ubiquinone reduction. The polypeptide is Succinate dehydrogenase [ubiquinone] cytochrome b small subunit, mitochondrial (SDH4) (Saccharomyces cerevisiae (strain ATCC 204508 / S288c) (Baker's yeast)).